A 776-amino-acid polypeptide reads, in one-letter code: Microtubule-associated protein tau (776 aa).

The span at 1–26 (MAEPRQEFEVMEDHAGTYGLGDRKDQ) shows a compositional bias: basic and acidic residues. The interval 1 to 591 (MAEPRQEFEV…PVPMPDLKNV (591 aa)) is disordered. Alanine 2 is modified (N-acetylalanine). Residues tyrosine 18 and tyrosine 29 each carry the phosphotyrosine modification. Residue lysine 44 forms a Glycyl lysine isopeptide (Lys-Gly) (interchain with G-Cter in ubiquitin) linkage. A phosphoserine mark is found at serine 46 and serine 61. A compositionally biased stretch (polar residues) spans 61 to 71 (SETSDAKSTPT). Phosphothreonine occurs at positions 69, 71, and 111. Composition is skewed to basic and acidic residues over residues 179–189 (EGGRHAPELLK) and 207–216 (GGKERPGSKE). Serine 214 is subject to Phosphoserine. The span at 217 to 228 (EVDEDRDVDESS) shows a compositional bias: acidic residues. Composition is skewed to basic and acidic residues over residues 293–303 (KGQDAHLEFTF) and 314–323 (EQAHSEEHLG). The segment covering 324–340 (RAAFPGAPGEGPEARGP) has biased composition (low complexity). Basic and acidic residues-rich tracts occupy residues 344-356 (EDTK…EPSE) and 381-393 (KSKD…DKKA). Residues 440-452 (KYVSSVTPRTGSS) are compositionally biased toward polar residues. The segment covering 455–466 (KEMKLKGADGKT) has biased composition (basic and acidic residues). Threonine 470 is subject to Phosphothreonine. Omega-N-methylarginine is present on arginine 472. Lysine 480 carries the N6,N6-dimethyllysine; alternate modification. Position 480 is an N6-acetyllysine; alternate (lysine 480). Phosphothreonine occurs at positions 486, 492, and 498. 3 positions are modified to phosphoserine: serine 502, serine 526, and serine 530. A compositionally biased stretch (basic and acidic residues) spans 517 to 528 (RSERGEPPKSGD). The segment covering 529 to 549 (RSGYSSPGSPGTPGSRSRTPS) has biased composition (low complexity). At tyrosine 532 the chain carries Phosphotyrosine. Serine 533, serine 534, and serine 537 each carry phosphoserine. Residues threonine 540 and threonine 547 each carry the phosphothreonine modification. A Phosphoserine modification is found at serine 549. Residue threonine 552 is modified to Phosphothreonine. An N6-acetyllysine modification is found at lysine 560. Threonine 566 is modified (phosphothreonine). Residues serine 570 and serine 572 each carry the phosphoserine modification. 4 Tau/MAP repeats span residues 579–609 (QTAP…GGGK), 610–640 (VQII…GGGS), 641–671 (VQIV…GGGQ), and 672–703 (VEVK…GGGN). Lysine 589 participates in a covalent cross-link: Glycyl lysine isopeptide (Lys-Gly) (interchain with G-Cter in ubiquitin). Lysine 594 bears the N6-acetyllysine; alternate mark. Lysine 594 is subject to N6-methyllysine; alternate. A Glycyl lysine isopeptide (Lys-Gly) (interchain with G-Cter in ubiquitin); alternate cross-link involves residue lysine 594. A Phosphoserine modification is found at serine 597. Lysine 602 is covalently cross-linked (Glycyl lysine isopeptide (Lys-Gly) (interchain with G-Cter in ubiquitin)). Residue lysine 616 is modified to N6-acetyllysine; alternate. Residue lysine 616 forms a Glycyl lysine isopeptide (Lys-Gly) (interchain with G-Cter in ubiquitin); alternate linkage. Phosphoserine is present on residues serine 620 and serine 624. An N6-acetyllysine modification is found at lysine 625. Serine 628 is modified (phosphoserine). Lysine 633 is subject to N6-acetyllysine; alternate. Residue lysine 633 forms a Glycyl lysine isopeptide (Lys-Gly) (interchain with G-Cter in ubiquitin); alternate linkage. Serine 640 is subject to Phosphoserine. Lysine 646 is modified (N6,N6-dimethyllysine; alternate). N6-acetyllysine; alternate is present on residues lysine 646, lysine 652, and lysine 656. Residues lysine 646, lysine 652, and lysine 656 each participate in a glycyl lysine isopeptide (Lys-Gly) (interchain with G-Cter in ubiquitin); alternate cross-link. Serine 659 bears the Phosphoserine mark. Residues lysine 666, lysine 678, and lysine 682 each carry the N6-acetyllysine; alternate modification. Residues lysine 666, lysine 678, and lysine 682 each participate in a glycyl lysine isopeptide (Lys-Gly) (interchain with G-Cter in ubiquitin); alternate cross-link. Arginine 684 carries the omega-N-methylarginine modification. Position 687 is a phosphoserine (serine 687). Lysine 688 participates in a covalent cross-link: Glycyl lysine isopeptide (Lys-Gly) (interchain with G-Cter in ubiquitin). At serine 691 the chain carries Phosphoserine. The residue at position 704 (lysine 704) is an N6-acetyllysine; alternate. Residue lysine 704 forms a Glycyl lysine isopeptide (Lys-Gly) (interchain with G-Cter in ubiquitin); alternate linkage. A Glycyl lysine isopeptide (Lys-Gly) (interchain with G-Cter in ubiquitin) cross-link involves residue lysine 710. N6-acetyllysine; alternate is present on lysine 720. Lysine 720 participates in a covalent cross-link: Glycyl lysine isopeptide (Lys-Gly) (interchain with G-Cter in ubiquitin); alternate. Tyrosine 729 carries the phosphotyrosine modification. Residues serine 731 and serine 735 each carry the phosphoserine modification. Residues 733 to 752 (VVSGDTSPRHLSNVSSTGSI) are disordered. Positions 736–751 (GDTSPRHLSNVSSTGS) are enriched in polar residues. Threonine 738 is modified (phosphothreonine). 4 positions are modified to phosphoserine: serine 739, serine 744, serine 751, and serine 757. Position 762 is a phosphothreonine (threonine 762).

Interacts with MARK1, MARK2, MARK3 and MARK4. Interacts with SQSTM1 when polyubiquitinated. Interacts with PSMC2 through SQSTM1. Interacts with FKBP4. Binds to CSNK1D. Interacts with SGK1. Interacts with EPM2A; the interaction dephosphorylates MAPT at Ser-396. Interacts with PIN1. Interacts with LRRK2. Interacts with LRP1, leading to endocytosis; this interaction is reduced in the presence of LRPAP1/RAP. Polyubiquitinated. Requires functional TRAF6 and may provoke SQSTM1-dependent degradation by the proteasome. Post-translationally, phosphorylation at various serine and threonine residues in S-P or T-P motifs by proline-directed protein kinases (PDPK1, CDK1, CDK5, GSK3, MAPK) (a few sites per protein in interphase, more in mitosis), and at serine residues in K-X-G-S motifs by MAP/microtubule affinity-regulating kinase (MARK1, MARK2, MARK3 or MARK4), causing detachment from microtubules, and their disassembly. Phosphorylation at Ser-597 by BRSK1 and BRSK2 in neurons affects ability to bind microtubules and plays a role in neuron polarization. Phosphorylated by PHK. Dephosphorylation at several serine and threonine residues by the serine/threonine phosphatase PPP5C. Phosphorylation at Ser-214 by SGK1 mediates microtubule depolymerization and neurite formation in hippocampal neurons.

Its subcellular location is the cytoplasm. The protein resides in the cytosol. It localises to the cell membrane. It is found in the cytoskeleton. The protein localises to the cell projection. Its subcellular location is the axon. The protein resides in the dendrite. Its function is as follows. Promotes microtubule assembly and stability, and might be involved in the establishment and maintenance of neuronal polarity. The C-terminus binds axonal microtubules while the N-terminus binds neural plasma membrane components, suggesting that tau functions as a linker protein between both. Axonal polarity is predetermined by tau localization (in the neuronal cell) in the domain of the cell body defined by the centrosome. The short isoforms allow plasticity of the cytoskeleton whereas the longer isoforms may preferentially play a role in its stabilization. In Pan troglodytes (Chimpanzee), this protein is Microtubule-associated protein tau (MAPT).